The sequence spans 693 residues: FAST kinase domain-containing protein 2, mitochondrial (693 aa).

2 positions are modified to phosphoserine: serine 110 and serine 124. The 58-residue stretch at 618 to 675 folds into the RAP domain; the sequence is VAVLCVSRSAYCLGSSHPRGFLAMKMRHLNAMGFRVILVNNWEMDKLEMEDAVTFLKT. The residue at position 692 (serine 692) is a Phosphoserine.

The protein belongs to the FAST kinase family. In terms of assembly, monomer. Found in a complex with GRSF1, DDX28, DHX30 and FASTKD5. Associates with the 16S mitochondrial rRNA (16S mt-rRNA). Forms a regulatory protein-RNA complex, consisting of RCC1L, NGRN, RPUSD3, RPUSD4, TRUB2, FASTKD2 and 16S mt-rRNA.

Its subcellular location is the mitochondrion matrix. The protein resides in the mitochondrion nucleoid. Functionally, plays an important role in assembly of the mitochondrial large ribosomal subunit. As a component of a functional protein-RNA module, consisting of RCC1L, NGRN, RPUSD3, RPUSD4, TRUB2, FASTKD2 and 16S mitochondrial ribosomal RNA (16S mt-rRNA), controls 16S mt-rRNA abundance and is required for intra-mitochondrial translation. May play a role in mitochondrial apoptosis. In Pongo abelii (Sumatran orangutan), this protein is FAST kinase domain-containing protein 2, mitochondrial (FASTKD2).